We begin with the raw amino-acid sequence, 615 residues long: Zinc metalloproteinase-disintegrin-like (615 aa).

Positions 1–20 (MIQALLVTICLVGFPHQGSS) are cleaved as a signal peptide. Positions 21–195 (IILESGNVKD…KMNFQSANNP (175 aa)) are excised as a propeptide. The region spanning 204–400 (KYIKLAVVVD…DLPQCILNKP (197 aa)) is the Peptidase M12B domain. Cystine bridges form between Cys-315-Cys-395, Cys-355-Cys-379, and Cys-357-Cys-362. His-340 provides a ligand contact to Zn(2+). Glu-341 is an active-site residue. Residues His-344 and His-350 each coordinate Zn(2+). The 87-residue stretch at 408–494 (PAVCGNNFVE…DCPMDGLQRN (87 aa)) folds into the Disintegrin domain. Ca(2+)-binding residues include Val-410, Asn-413, Phe-415, Glu-417, and Asp-423. Disulfide bonds link Cys-411-Cys-440, Cys-422-Cys-435, Cys-424-Cys-430, Cys-434-Cys-457, Cys-448-Cys-454, Cys-453-Cys-479, Cys-466-Cys-486, Cys-473-Cys-505, Cys-498-Cys-510, Cys-517-Cys-567, Cys-532-Cys-576, Cys-545-Cys-555, Cys-562-Cys-602, and Cys-596-Cys-608. A D/ECD-tripeptide motif is present at residues 472-474 (DCD).

Belongs to the venom metalloproteinase (M12B) family. P-III subfamily. P-IIIa sub-subfamily. As to quaternary structure, monomer. It depends on Zn(2+) as a cofactor. Expressed by the venom gland.

It localises to the secreted. In terms of biological role, snake venom zinc metalloprotease that may induce platelet aggregation. This Cerberus rynchops (Dog-faced water snake) protein is Zinc metalloproteinase-disintegrin-like.